An 87-amino-acid chain; its full sequence is MVVIRLSRGGSKGRPFFNIVVSDKRVRRDGRFIERLGFYNPTAKENEESIRIAQDRLAYWKSVGAQASPTVLRLIKQAAAAAPKAAA.

The protein belongs to the bacterial ribosomal protein bS16 family.

The sequence is that of Small ribosomal subunit protein bS16 from Variovorax paradoxus (strain S110).